We begin with the raw amino-acid sequence, 447 residues long: UPF0210 protein lhv_0606 (447 aa).

Belongs to the UPF0210 family. Homodimer.

This Lactobacillus helveticus (strain DPC 4571) protein is UPF0210 protein lhv_0606.